The primary structure comprises 233 residues: Glucosamine-6-phosphate deaminase (233 aa).

Asp62 acts as the Proton acceptor; for enolization step in catalysis. Catalysis depends on Asn128, which acts as the For ring-opening step. His130 acts as the Proton acceptor; for ring-opening step in catalysis. The For ring-opening step role is filled by Glu135.

The protein belongs to the glucosamine/galactosamine-6-phosphate isomerase family. NagB subfamily.

It catalyses the reaction alpha-D-glucosamine 6-phosphate + H2O = beta-D-fructose 6-phosphate + NH4(+). It participates in amino-sugar metabolism; N-acetylneuraminate degradation; D-fructose 6-phosphate from N-acetylneuraminate: step 5/5. Functionally, catalyzes the reversible isomerization-deamination of glucosamine 6-phosphate (GlcN6P) to form fructose 6-phosphate (Fru6P) and ammonium ion. The protein is Glucosamine-6-phosphate deaminase of Streptococcus thermophilus (strain ATCC BAA-491 / LMD-9).